Consider the following 400-residue polypeptide: Deoxyguanosinetriphosphate triphosphohydrolase-like protein (400 aa).

In terms of domain architecture, HD spans 76 to 204 (RLTHTLEVAQ…VNIADPLAYC (129 aa)).

Belongs to the dGTPase family. Type 2 subfamily.

The sequence is that of Deoxyguanosinetriphosphate triphosphohydrolase-like protein from Syntrophus aciditrophicus (strain SB).